A 504-amino-acid chain; its full sequence is Endosomal/lysosomal proton channel TMEM175 (504 aa).

A disordered region spans residues 1 to 27 (MSQPRTPEQALDTPGDCPPGRRDEDAG). Topologically, residues 1 to 33 (MSQPRTPEQALDTPGDCPPGRRDEDAGEGIQCS) are cytoplasmic. Phosphothreonine is present on Thr-6. A helical membrane pass occupies residues 34–56 (QRMLSFSDALLSIIATVMILPVT). Residues 35 to 41 (RMLSFSD) carry the RxxxFSD motif 1 motif. At 57-77 (HTEISPEQQFDRSVQRLLATR) the chain is on the lumenal side. A short helix H1-1 region spans residues 58-63 (TEISPE). The interval 65 to 71 (QFDRSVQ) is short helix H2-1. A helical membrane pass occupies residues 78 to 100 (IAVYLMTFLIVTVAWAAHTRLFQ). Topologically, residues 101 to 106 (VVGKTD) are cytoplasmic. The chain crosses the membrane as a helical span at residues 107-128 (DTLALLNLACMMTITFLPYTFS). The Lumenal segment spans residues 129-138 (LMVTFPDVPL). The chain crosses the membrane as a helical span at residues 139–160 (GIFLFCVCVIAIGVVQALIVGY). The Cytoplasmic segment spans residues 161–184 (AFHFPHLLSPQIQRSAHRALYRRH). A helical membrane pass occupies residues 185–205 (VLGIVLQGPALCFAAAIFSLF). The Lumenal portion of the chain corresponds to 206-210 (FVPLS). A helical membrane pass occupies residues 211-230 (YLLMVTVILLPYVSKVTGWC). Over 231-257 (RDRLLGHREPSAHPVEVFSFDLHEPLS) the chain is Cytoplasmic. The chain crosses the membrane as a helical span at residues 258–282 (KERVEAFSDGVYAIVATLLILDICE). The short motif at 260–266 (RVEAFSD) is the RxxxFSD motif 2 element. Residues 283–309 (DNVPDPKDVKERFSGSLVAALSATGPR) are Lumenal-facing. Positions 288-296 (PKDVKERFS) are short helix H1-2. Residues 298 to 304 (SLVAALS) are short helix H2-2. Residues 310 to 332 (FLAYFGSFATVGLLWFAHHSLFL) traverse the membrane as a helical segment. Topologically, residues 333–338 (HVRKAT) are cytoplasmic. The helical transmembrane segment at 339-360 (RAMGLLNTLSLAFVGGLPLAYQ) threads the bilayer. Residues 361–375 (QTSAFARQPRDELER) lie on the Lumenal side of the membrane. Residues 376–396 (VRVSCTIIFLASIFQLAMWTT) traverse the membrane as a helical segment. Topologically, residues 397–416 (ALLHQAETLQPSVWFGGREH) are cytoplasmic. Residues 417 to 440 (VLMFAKLALYPCASLLAFASTCLL) traverse the membrane as a helical segment. The Lumenal portion of the chain corresponds to 441-442 (SR). A helical membrane pass occupies residues 443 to 469 (FSVGIFHLMQIAVPCAFLLLRLLVGLA). The Cytoplasmic portion of the chain corresponds to 470–504 (LATLRVLRGLARPEHPPPAPTGQDDPQSQLLPAPC). The interval 483–504 (EHPPPAPTGQDDPQSQLLPAPC) is disordered. Polar residues predominate over residues 493–504 (DDPQSQLLPAPC).

Belongs to the TMEM175 family. In terms of assembly, homodimer. Interacts with AKT (AKT1, AKT2 or AKT3); leading to formation of the lysoK(GF) complex, which activates the channel. Interacts with LAMP1; inhibiting the proton channel activity of TMEM175. Interacts with LAMP2; inhibiting the proton channel activity of TMEM175. As to expression, widely expressed.

It is found in the endosome membrane. Its subcellular location is the lysosome membrane. It carries out the reaction H(+)(in) = H(+)(out). It catalyses the reaction K(+)(in) = K(+)(out). Active at low pH (under pH 4.6): proton channel activity is activated by luminal side protons. Polyunsaturated fatty acids, such as arachidonic acid, also activate the channel activity. Proton channel activity is directly inhibited by LAMP1 or LAMP2, facilitating lysosomal acidification. Channel activity is activated following interaction with AKT (AKT1, AKT2 or AKT3): interaction promotes activation from closed to an open state. Activation by AKT is independent of AKT serine/threonine-protein kinase activity. In terms of biological role, proton-activated proton channel that catalyzes proton efflux from endosomes and lysosomes to maintain a steady-state pH. Activated at low pH (under pH 4.6) by luminal side protons: selectively mediates lysosomal proton release from lysosomes, eliciting a proton leak that balances V-ATPase activity to maintain pH homeostasis. Regulation of lumenal pH stability is required for autophagosome-lysosome fusion. Also acts as a potassium channel at higher pH, regulating potassium conductance in endosomes and lysosomes. Constitutes the pore-forming subunit of the lysoK(GF) complex, a complex activated by extracellular growth factors. The lysoK(GF) complex is composed of TMEM175 and AKT (AKT1, AKT2 or AKT3), a major target of growth factor receptors: in the complex, TMEM175 channel is opened by conformational changes by AKT, leading to its activation. The lysoK(GF) complex is required to protect neurons against stress-induced damage. The sequence is that of Endosomal/lysosomal proton channel TMEM175 from Homo sapiens (Human).